We begin with the raw amino-acid sequence, 331 residues long: DNA-directed RNA polymerase subunit alpha (331 aa).

An alpha N-terminal domain (alpha-NTD) region spans residues 1–226 (MLIAQRPTLT…ELFGLCRELN (226 aa)). Residues 243–331 (TNPEMAVPIE…GGTFFSPEDE (89 aa)) form an alpha C-terminal domain (alpha-CTD) region.

Belongs to the RNA polymerase alpha chain family. As to quaternary structure, homodimer. The RNAP catalytic core consists of 2 alpha, 1 beta, 1 beta' and 1 omega subunit. When a sigma factor is associated with the core the holoenzyme is formed, which can initiate transcription.

The enzyme catalyses RNA(n) + a ribonucleoside 5'-triphosphate = RNA(n+1) + diphosphate. Its function is as follows. DNA-dependent RNA polymerase catalyzes the transcription of DNA into RNA using the four ribonucleoside triphosphates as substrates. The polypeptide is DNA-directed RNA polymerase subunit alpha (Bifidobacterium longum (strain NCC 2705)).